Reading from the N-terminus, the 541-residue chain is Thioredoxin reductase (541 aa).

Residues 51 to 52, 71 to 74, 87 to 88, 92 to 96, alanine 161, aspartate 357, and 364 to 366 contribute to the FAD site; these read PG, DYVK, TC, GCVPK, and ELA. A disulfide bond links cysteine 88 and cysteine 93. Residues 438–452 form a loop important for the interaction with TRX1 region; the sequence is HRQKHIRAQKDEYDL. Residue histidine 509 coordinates FAD. Histidine 509 (proton acceptor) is an active-site residue. A disulfide bond links cysteine 535 and cysteine 540.

It belongs to the class-I pyridine nucleotide-disulfide oxidoreductase family. As to quaternary structure, homodimer. FAD serves as cofactor.

The protein resides in the cytoplasm. The catalysed reaction is [thioredoxin]-dithiol + NADP(+) = [thioredoxin]-disulfide + NADPH + H(+). Its function is as follows. Catalyzes the transfer of electrons from NADPH to thioredoxins TRX1, TRX2 and TRX3, which in turn act as reductants of disulfide containing proteins. Able to reduce nitroglutathione (GSNO), a compound involved in the transport of nitric oxide (NO); however, TRX1 is more efficient in reducing GSNO. Has no catalytic activity towards oxidized glutathione (GSSG). The polypeptide is Thioredoxin reductase (Plasmodium falciparum (isolate FCH-5)).